A 242-amino-acid chain; its full sequence is Protein GrpE (242 aa).

Polar residues predominate over residues 1-10 (MAGENSSTET). Residues 1–64 (MAGENSSTET…QSTESTSKEK (64 aa)) form a disordered region. The segment covering 11 to 20 (KNQEINEKTP) has biased composition (basic and acidic residues). Composition is skewed to polar residues over residues 21–32 (EVQTFETNVEFE) and 40–59 (DTELSADNASIDTDIQSTES).

The protein belongs to the GrpE family. As to quaternary structure, homodimer.

The protein localises to the cytoplasm. Functionally, participates actively in the response to hyperosmotic and heat shock by preventing the aggregation of stress-denatured proteins, in association with DnaK and GrpE. It is the nucleotide exchange factor for DnaK and may function as a thermosensor. Unfolded proteins bind initially to DnaJ; upon interaction with the DnaJ-bound protein, DnaK hydrolyzes its bound ATP, resulting in the formation of a stable complex. GrpE releases ADP from DnaK; ATP binding to DnaK triggers the release of the substrate protein, thus completing the reaction cycle. Several rounds of ATP-dependent interactions between DnaJ, DnaK and GrpE are required for fully efficient folding. This chain is Protein GrpE, found in Trichodesmium erythraeum (strain IMS101).